The chain runs to 473 residues: Lactate utilization protein B (473 aa).

2 consecutive 4Fe-4S ferredoxin-type domains span residues 302–332 (GSEFRQVLQCIRCAACVNVCPVYRHVGGHSY) and 351–380 (YDDYKELPYASSLCGACTEACPVKIPLHDL). [4Fe-4S] cluster-binding residues include cysteine 311, cysteine 314, cysteine 317, cysteine 321, cysteine 364, cysteine 367, and cysteine 371.

Belongs to the LutB/YkgF family.

In terms of biological role, is involved in L-lactate degradation and allows cells to grow with lactate as the sole carbon source. Has probably a role as an electron transporter during oxidation of L-lactate. The chain is Lactate utilization protein B from Bacillus anthracis (strain A0248).